A 504-amino-acid chain; its full sequence is Occludin (504 aa).

Over 1-57 (MFSKKSYDGPPAGYGPPTGYGAPTADYGYGSPPPGSYYVDDAPQLFYKWTSPPGAVR) the chain is Cytoplasmic. An MARVEL domain is found at 51-253 (SPPGAVRGLQ…ICFFAQKTRS (203 aa)). A helical transmembrane segment spans residues 58 to 80 (GLQAGVLVLCIAIFACVASTLAW). At 81–123 (DYGYGLGGAYGTGLGGFYGSNYYGSGLSYSYGYGGYYGGVNQR) the chain is on the extracellular side. The chain crosses the membrane as a helical span at residues 124–148 (TANGFMIAMAVLCFLAQLGLLVAAL). The Cytoplasmic portion of the chain corresponds to 149 to 158 (SKSGATRSRR). A helical membrane pass occupies residues 159–183 (FYLAVLVLSAVLAFVMLIASIVYIM). The Extracellular segment spans residues 184 to 227 (GVNPQAQMSSGYYYSPLLAMCSQAYGSTYLNQYIYHYCTVDPQE). A disulfide bond links cysteine 204 and cysteine 221. The helical transmembrane segment at 228 to 249 (AVAAVCGFLIVILLCLICFFAQ) threads the bilayer. Topologically, residues 250-504 (KTRSKIWRYG…MVSAYDKVRG (255 aa)) are cytoplasmic. Residues 324–396 (PSGTYSSRGD…VESSDERDQE (73 aa)) form a disordered region. Basic residues predominate over residues 361–370 (PARRGRRRRR). Phosphotyrosine is present on residues tyrosine 379 and tyrosine 383. The interval 379-385 (YETDYTT) is interaction with TJP1. In terms of domain architecture, OCEL spans 396 to 504 (EQWASLYPPI…MVSAYDKVRG (109 aa)). Positions 412–471 (QRYKQEFDTDLKRYKQLCAEMDSINDRLNQLSRRLDSITEDSPQYQDVAEEYNQLKDLKR) form a coiled coil.

This sequence belongs to the ELL/occludin family. As to quaternary structure, interacts with TJP1 and TJP3. Post-translationally, phosphorylated. As to expression, localized at tight junctions of both epithelial and endothelial cells. Highly expressed in lung and liver. Expressed at a lower level in brain.

The protein localises to the cell membrane. The protein resides in the cell junction. It is found in the tight junction. Its function is as follows. May play a role in the formation and regulation of the tight junction (TJ) paracellular permeability barrier. Interacts with ZO-1. This Gallus gallus (Chicken) protein is Occludin (OCLN).